A 177-amino-acid chain; its full sequence is Large ribosomal subunit protein uL6 (177 aa).

This sequence belongs to the universal ribosomal protein uL6 family. In terms of assembly, part of the 50S ribosomal subunit.

Functionally, this protein binds to the 23S rRNA, and is important in its secondary structure. It is located near the subunit interface in the base of the L7/L12 stalk, and near the tRNA binding site of the peptidyltransferase center. This Rhizorhabdus wittichii (strain DSM 6014 / CCUG 31198 / JCM 15750 / NBRC 105917 / EY 4224 / RW1) (Sphingomonas wittichii) protein is Large ribosomal subunit protein uL6.